A 108-amino-acid polypeptide reads, in one-letter code: UPF0060 membrane protein CKO_01576 (108 aa).

Helical transmembrane passes span 6 to 26 (LLFFMTALCEIVGCFLPWLWL), 29 to 49 (GATAWLLVPAGVSLALFVWLL), 61 to 81 (AAYGGVYVCTALLWLRFVDGV), and 85 to 105 (LYDWSGALIALCGMLIIVAGW).

It belongs to the UPF0060 family.

Its subcellular location is the cell inner membrane. The chain is UPF0060 membrane protein CKO_01576 from Citrobacter koseri (strain ATCC BAA-895 / CDC 4225-83 / SGSC4696).